We begin with the raw amino-acid sequence, 366 residues long: tRNA 2-selenouridine synthase (366 aa).

The Rhodanese domain occupies 14–137 (LLENRPLIDV…IRSFLINTIE (124 aa)). The active-site S-selanylcysteine intermediate is the C97.

This sequence belongs to the SelU family. In terms of assembly, monomer.

The catalysed reaction is 5-methylaminomethyl-2-thiouridine(34) in tRNA + selenophosphate + (2E)-geranyl diphosphate + H2O + H(+) = 5-methylaminomethyl-2-selenouridine(34) in tRNA + (2E)-thiogeraniol + phosphate + diphosphate. It catalyses the reaction 5-methylaminomethyl-2-thiouridine(34) in tRNA + (2E)-geranyl diphosphate = 5-methylaminomethyl-S-(2E)-geranyl-thiouridine(34) in tRNA + diphosphate. The enzyme catalyses 5-methylaminomethyl-S-(2E)-geranyl-thiouridine(34) in tRNA + selenophosphate + H(+) = 5-methylaminomethyl-2-(Se-phospho)selenouridine(34) in tRNA + (2E)-thiogeraniol. It carries out the reaction 5-methylaminomethyl-2-(Se-phospho)selenouridine(34) in tRNA + H2O = 5-methylaminomethyl-2-selenouridine(34) in tRNA + phosphate. Its function is as follows. Involved in the post-transcriptional modification of the uridine at the wobble position (U34) of tRNA(Lys), tRNA(Glu) and tRNA(Gln). Catalyzes the conversion of 2-thiouridine (S2U-RNA) to 2-selenouridine (Se2U-RNA). Acts in a two-step process involving geranylation of 2-thiouridine (S2U) to S-geranyl-2-thiouridine (geS2U) and subsequent selenation of the latter derivative to 2-selenouridine (Se2U) in the tRNA chain. This chain is tRNA 2-selenouridine synthase, found in Shewanella frigidimarina (strain NCIMB 400).